The sequence spans 518 residues: Integrator complex subunit 14 (518 aa).

The VWFA domain occupies 2-204 (PTVVVMDVSL…KNVQSMFGKL (203 aa)). Residues Ser-10, Ser-12, and Thr-86 each contribute to the Mg(2+) site. Residue Lys-418 is modified to N6-acetyllysine.

It belongs to the Integrator subunit 14 family. As to quaternary structure, component of the Integrator complex, composed of core subunits INTS1, INTS2, INTS3, INTS4, INTS5, INTS6, INTS7, INTS8, INTS9/RC74, INTS10, INTS11/CPSF3L, INTS12, INTS13, INTS14 and INTS15. The core complex associates with protein phosphatase 2A subunits PPP2CA and PPP2R1A, to form the Integrator-PP2A (INTAC) complex. INTS14 is part of the tail subcomplex, composed of INTS10, INTS13, INTS14 and INTS15. In terms of tissue distribution, strongly expressed in numerous cancer cells compared with their non-cancerous counterparts (lung, prostate, colon, stomach and skin).

The protein localises to the nucleus. Its function is as follows. Component of the integrator complex, a multiprotein complex that terminates RNA polymerase II (Pol II) transcription in the promoter-proximal region of genes. The integrator complex provides a quality checkpoint during transcription elongation by driving premature transcription termination of transcripts that are unfavorably configured for transcriptional elongation: the complex terminates transcription by (1) catalyzing dephosphorylation of the C-terminal domain (CTD) of Pol II subunit POLR2A/RPB1 and SUPT5H/SPT5, (2) degrading the exiting nascent RNA transcript via endonuclease activity and (3) promoting the release of Pol II from bound DNA. The integrator complex is also involved in terminating the synthesis of non-coding Pol II transcripts, such as enhancer RNAs (eRNAs), small nuclear RNAs (snRNAs), telomerase RNAs and long non-coding RNAs (lncRNAs). Within the integrator complex, INTS14 is part of the integrator tail module that acts as a platform for the recruitment of transcription factors at promoters. This is Integrator complex subunit 14 from Homo sapiens (Human).